A 376-amino-acid polypeptide reads, in one-letter code: tRNA-specific 2-thiouridylase MnmA (376 aa).

ATP is bound by residues 17-24 (GMSGGVDS) and methionine 43. The interaction with target base in tRNA stretch occupies residues 103–105 (NPD). Cysteine 108 serves as the catalytic Nucleophile. Cysteine 108 and cysteine 204 form a disulfide bridge. Residue glycine 132 coordinates ATP. Residues 154–156 (KDQ) are interaction with tRNA. The Cysteine persulfide intermediate role is filled by cysteine 204. Residues 316–317 (RY) are interaction with tRNA.

This sequence belongs to the MnmA/TRMU family.

The protein localises to the cytoplasm. It catalyses the reaction S-sulfanyl-L-cysteinyl-[protein] + uridine(34) in tRNA + AH2 + ATP = 2-thiouridine(34) in tRNA + L-cysteinyl-[protein] + A + AMP + diphosphate + H(+). In terms of biological role, catalyzes the 2-thiolation of uridine at the wobble position (U34) of tRNA, leading to the formation of s(2)U34. In Pseudomonas savastanoi pv. phaseolicola (strain 1448A / Race 6) (Pseudomonas syringae pv. phaseolicola (strain 1448A / Race 6)), this protein is tRNA-specific 2-thiouridylase MnmA.